Consider the following 266-residue polypeptide: Glutamate racemase (266 aa).

Substrate is bound by residues 9 to 10 and 41 to 42; these read DS and YG. Cys72 acts as the Proton donor/acceptor in catalysis. 73–74 lines the substrate pocket; it reads NT. Cys184 acts as the Proton donor/acceptor in catalysis. 185-186 is a substrate binding site; it reads TH.

This sequence belongs to the aspartate/glutamate racemases family.

The catalysed reaction is L-glutamate = D-glutamate. It participates in cell wall biogenesis; peptidoglycan biosynthesis. Provides the (R)-glutamate required for cell wall biosynthesis. This is Glutamate racemase from Staphylococcus haemolyticus (strain JCSC1435).